We begin with the raw amino-acid sequence, 508 residues long: Photosystem II CP47 reaction center protein (508 aa).

Helical transmembrane passes span 21–36 (SVHI…WAGS), 101–115 (IVFS…IWHW), 140–156 (GIHL…FGAF), 203–218 (IAAG…FHLS), 237–252 (VLSS…AFVV), and 457–472 (TFAL…HGAR).

The protein belongs to the PsbB/PsbC family. PsbB subfamily. PSII is composed of 1 copy each of membrane proteins PsbA, PsbB, PsbC, PsbD, PsbE, PsbF, PsbH, PsbI, PsbJ, PsbK, PsbL, PsbM, PsbT, PsbX, PsbY, PsbZ, Psb30/Ycf12, at least 3 peripheral proteins of the oxygen-evolving complex and a large number of cofactors. It forms dimeric complexes. Binds multiple chlorophylls. PSII binds additional chlorophylls, carotenoids and specific lipids. is required as a cofactor.

It is found in the plastid. Its subcellular location is the chloroplast thylakoid membrane. One of the components of the core complex of photosystem II (PSII). It binds chlorophyll and helps catalyze the primary light-induced photochemical processes of PSII. PSII is a light-driven water:plastoquinone oxidoreductase, using light energy to abstract electrons from H(2)O, generating O(2) and a proton gradient subsequently used for ATP formation. This Chloranthus spicatus (Chulantree) protein is Photosystem II CP47 reaction center protein.